Consider the following 570-residue polypeptide: Vacuolar protein sorting-associated protein 45 (570 aa).

Phosphoserine is present on residues Ser-307 and Ser-441.

Belongs to the STXBP/unc-18/SEC1 family. Interacts with ZFYVE20. Interacts with STX6.

It is found in the golgi apparatus membrane. Its subcellular location is the endosome membrane. In terms of biological role, may play a role in vesicle-mediated protein trafficking from the Golgi stack through the trans-Golgi network. The chain is Vacuolar protein sorting-associated protein 45 (Vps45) from Mus musculus (Mouse).